We begin with the raw amino-acid sequence, 280 residues long: Phosphonates import ATP-binding protein PhnC (280 aa).

The 236-residue stretch at 4–239 (ITVTNLHKSY…VIDDIYGNIQ (236 aa)) folds into the ABC transporter domain. 36–43 (GESGAGKS) serves as a coordination point for ATP. Residues 246–280 (GDDANADVAPTTSSDGGTDAAGGPDQQPASDPHLS) form a disordered region.

This sequence belongs to the ABC transporter superfamily. Phosphonates importer (TC 3.A.1.9.1) family. As to quaternary structure, the complex is composed of two ATP-binding proteins (PhnC), two transmembrane proteins (PhnE) and a solute-binding protein (PhnD).

The protein resides in the cell membrane. The enzyme catalyses phosphonate(out) + ATP + H2O = phosphonate(in) + ADP + phosphate + H(+). Its function is as follows. Part of the ABC transporter complex PhnCDE involved in phosphonates import. Responsible for energy coupling to the transport system. The chain is Phosphonates import ATP-binding protein PhnC from Halobacterium salinarum (strain ATCC 700922 / JCM 11081 / NRC-1) (Halobacterium halobium).